The sequence spans 56 residues: Large ribosomal subunit protein bL33 (56 aa).

This sequence belongs to the bacterial ribosomal protein bL33 family.

The chain is Large ribosomal subunit protein bL33 from Dichelobacter nodosus (strain VCS1703A).